Here is a 215-residue protein sequence, read N- to C-terminus: Adenylate kinase (215 aa).

10 to 15 (GAGKGT) is an ATP binding site. Residues 30–59 (STGDMLRSAIKSGSELGKKAKQVMDAGQLV) form an NMP region. AMP-binding positions include Thr31, Arg36, 57-59 (QLV), 85-88 (GFPR), and Gln92. An LID region spans residues 122–159 (GRRVHPGSGRVYHVEHNPPKVEGKDDETGEDLVVRPDD). ATP is bound by residues Arg123 and 132–133 (VY). Residues 128–151 (GSGRVYHVEHNPPKVEGKDDETGE) form a disordered region. A compositionally biased stretch (basic and acidic residues) spans 133-144 (YHVEHNPPKVEG). Arg156 and Arg167 together coordinate AMP. A disordered region spans residues 195 to 215 (KIDGTQPVERVSEQLGDLLRK). ATP is bound at residue Gln200.

It belongs to the adenylate kinase family. In terms of assembly, monomer.

Its subcellular location is the cytoplasm. It carries out the reaction AMP + ATP = 2 ADP. It participates in purine metabolism; AMP biosynthesis via salvage pathway; AMP from ADP: step 1/1. Catalyzes the reversible transfer of the terminal phosphate group between ATP and AMP. Plays an important role in cellular energy homeostasis and in adenine nucleotide metabolism. The chain is Adenylate kinase from Idiomarina loihiensis (strain ATCC BAA-735 / DSM 15497 / L2-TR).